We begin with the raw amino-acid sequence, 554 residues long: MMLSRAKPAVGRGVQPTDKKKKKGRKIPKLEELLSKRDFTGAITLLEFKRHVGEEEEDTNLWIGYCAFHLGDYKRALEEYENATKEENCNSEVWVNLACTYFFLGMYKQAEAAGFKASKSRLQNRLLFHLAHKFNDEKKLMSFHQNLQDVTEDQLSLASIHYMRSHYQEAIDIYKRILLDNREYLALNVYVALCYYKLDYYDVSQEVLAVYLQQIPDSTIALNLKACNHFRLYNGRAAEAELKSLMDNASSSFEFAKELIRHNLVVFRGGEGALQVLPPLVDVIPEARLNLVIYYLRQDDVQEAYNLIKDLEPTTPQEYILKGVVNAALGQEMGSRDHMKIAQQFFQLVGGSASECDTIPGRQCMASCFFLLKQFDDVLIYLNSFKSYFYNDDIFNFNYAQAKAATGNTSEGEEAFLLIQSEKMKNDYIYLSWLARCYIMNKKPRLAWELYLKMETSGESFSLLQLIANDCYKMGQFYYSAKAFDVLERLDPNPEYWEGKRGACVGIFQMIVAGREPKETLREVLHLLRSTGNTQVEYMIRIMKKWAKENRVPI.

The tract at residues 1–26 is disordered; it reads MMLSRAKPAVGRGVQPTDKKKKKGRK. TPR repeat units follow at residues 57 to 90, 92 to 125, 151 to 184, and 468 to 501; these read EDTNLWIGYCAFHLGDYKRALEEYENATKEENCN, EVWVNLACTYFFLGMYKQAEAAGFKASKSRLQNR, TEDQLSLASIHYMRSHYQEAIDIYKRILLDNREY, and ANDCYKMGQFYYSAKAFDVLERLDPNPEYWEGKR.

Belongs to the IFT56 family. As to quaternary structure, component of the IFT complex B. Interacts with IFT46; the interaction is direct.

It localises to the cell projection. The protein resides in the cilium. Its function is as follows. Component of the intraflagellar transport (IFT) complex B required for transport of proteins in the motile cilium. Required for transport of specific ciliary cargo proteins related to motility, while it is neither required for IFT complex B assembly or motion nor for cilium assembly. Required for efficient coupling between the accumulation of GLI2 and GLI3 at the ciliary tips and their dissociation from the negative regulator SUFU. Plays a key role in maintaining the integrity of the IFT complex B and the proper ciliary localization of the IFT complex B components. Not required for IFT complex A ciliary localization or function. Essential for maintaining proper microtubule organization within the ciliary axoneme. The chain is Intraflagellar transport protein 56 (IFT56) from Macaca fascicularis (Crab-eating macaque).